A 122-amino-acid chain; its full sequence is Small ribosomal subunit protein uS13 (122 aa).

The tract at residues 95 to 122 (GLPVRGQRTHTNARTRKGPAKPIAGKKK) is disordered.

It belongs to the universal ribosomal protein uS13 family. Part of the 30S ribosomal subunit. Forms a loose heterodimer with protein S19. Forms two bridges to the 50S subunit in the 70S ribosome.

Its function is as follows. Located at the top of the head of the 30S subunit, it contacts several helices of the 16S rRNA. In the 70S ribosome it contacts the 23S rRNA (bridge B1a) and protein L5 of the 50S subunit (bridge B1b), connecting the 2 subunits; these bridges are implicated in subunit movement. Contacts the tRNAs in the A and P-sites. The protein is Small ribosomal subunit protein uS13 of Caulobacter vibrioides (strain ATCC 19089 / CIP 103742 / CB 15) (Caulobacter crescentus).